The chain runs to 170 residues: UPF0161 protein At3g09310 (170 aa).

2 disordered regions span residues Cys49–Leu70 and Ser147–Ile170. The span at Gly154–Ile170 shows a compositional bias: acidic residues.

This sequence belongs to the UPF0161 family.

The chain is UPF0161 protein At3g09310 from Arabidopsis thaliana (Mouse-ear cress).